A 314-amino-acid chain; its full sequence is uncharacterized protein (314 aa).

The next 10 membrane-spanning stretches (helical) occupy residues Phe-4–Gly-23, Phe-36–Ile-53, Thr-68–Phe-90, Ala-97–Val-116, Val-131–Ser-153, Pro-174–Trp-196, Phe-200–His-222, Glu-229–Ala-251, Met-261–Val-283, and Ala-290–Val-309.

This sequence belongs to the auxin efflux carrier (TC 2.A.69) family.

It is found in the cell membrane. This is an uncharacterized protein from Escherichia coli O157:H7.